A 625-amino-acid chain; its full sequence is DNA-directed RNA polymerase subunit gamma (625 aa).

Cys-71, Cys-73, Cys-86, and Cys-89 together coordinate Zn(2+). The Mg(2+) site is built by Asp-467, Asp-469, and Asp-471.

This sequence belongs to the RNA polymerase beta' chain family. RpoC1 subfamily. As to quaternary structure, in cyanobacteria the RNAP catalytic core is composed of 2 alpha, 1 beta, 1 beta', 1 gamma and 1 omega subunit. When a sigma factor is associated with the core the holoenzyme is formed, which can initiate transcription. Mg(2+) is required as a cofactor. It depends on Zn(2+) as a cofactor.

It catalyses the reaction RNA(n) + a ribonucleoside 5'-triphosphate = RNA(n+1) + diphosphate. Functionally, DNA-dependent RNA polymerase catalyzes the transcription of DNA into RNA using the four ribonucleoside triphosphates as substrates. The polypeptide is DNA-directed RNA polymerase subunit gamma (Gloeothece citriformis (strain PCC 7424) (Cyanothece sp. (strain PCC 7424))).